The chain runs to 380 residues: RNA-binding motif protein, Y chromosome, family 9 (380 aa).

Residues 8–86 (GKIFIGGLNI…KRIKVKQARR (79 aa)) enclose the RRM domain. Disordered regions lie at residues 82 to 226 (KQAR…STSR) and 279 to 358 (HEAP…YSAS). A compositionally biased stretch (polar residues) spans 166-178 (RSATSAQTRSNTG). Composition is skewed to basic and acidic residues over residues 180 to 190 (RGREPHRREIS) and 333 to 351 (IDRE…HSPK).

In terms of tissue distribution, testis-specific.

The protein resides in the nucleus. Its function is as follows. RNA-binding protein which may be involved in spermatogenesis. May be required for sperm development, possibly by participating in pre-mRNA splicing in the testis. In Mus musculus (Mouse), this protein is RNA-binding motif protein, Y chromosome, family 9.